The primary structure comprises 164 residues: Endoribonuclease YbeY (164 aa).

3 residues coordinate Zn(2+): H114, H118, and H124.

The protein belongs to the endoribonuclease YbeY family. It depends on Zn(2+) as a cofactor.

It is found in the cytoplasm. Functionally, single strand-specific metallo-endoribonuclease involved in late-stage 70S ribosome quality control and in maturation of the 3' terminus of the 16S rRNA. The sequence is that of Endoribonuclease YbeY from Mycoplasmoides gallisepticum (strain R(low / passage 15 / clone 2)) (Mycoplasma gallisepticum).